The primary structure comprises 97 residues: Citrate lyase acyl carrier protein (97 aa).

Position 14 is an O-(phosphoribosyl dephospho-coenzyme A)serine (S14).

The protein belongs to the CitD family. Oligomer with a subunit composition of (alpha,beta,gamma)6.

Its subcellular location is the cytoplasm. Covalent carrier of the coenzyme of citrate lyase. The protein is Citrate lyase acyl carrier protein of Oenococcus oeni (strain ATCC BAA-331 / PSU-1).